A 235-amino-acid polypeptide reads, in one-letter code: FsC-acetyl coenzyme A-N(2)-transacetylase (235 aa).

The N-acetyltransferase domain maps to 14–190 (LELVPLGHEH…RYSITREEWL (177 aa)). CoA is bound by residues 106-108 (FRV), glycine 114, asparagine 146, and 151-153 (AVM).

Its pathway is siderophore biosynthesis. In terms of biological role, fsC-acetyl coenzyme A-N(2)-transacetylase; part of the siderophore biosynthetic pathway. Aspergillus fumigatus produces 4 types of siderophores, low-molecular-mass iron chelators, including excreted fusarinine C (FsC) and triacetylfusarinine C (TAFC) for iron uptake and intacellular ferricrocin (FC) for hyphal and hydroxyferricrocin (HFC) for conidial iron distribution and storage. TAFC consists of 3 N(2)-acetyl-N(5)-anhydromevalonyl-N(5)-hydroxyornithine residues cyclically linked by ester bonds; FC is a cyclic hexapeptide with the structure Gly-Ser-Gly-(N(5)-acetyl-N(5)-hydroxyornithine)x3. The biosynthesis of all four siderophores depends on the hydroxylation of ornithine, catalyzed by the monooxygenase sidA. Subsequently, the pathways for biosynthesis of extra- and intracellular siderophores split. For biosynthesis of extracellular siderophores, the transacylase sidF transfers anhydromevalonyl to N(5)-hydroxyornithine. The required anhydromevalonyl-CoA moiety is derived from mevalonate by CoA ligation and dehydration catalyzed by sidI and sidH respectively. The acetylation of N(5)-hydroxyornithine for FC biosynthesis involves the constitutively expressed sidL. FC is hydroxylated to HFC by an as yet uncharacterized enzyme during conidiation. Assembly of fusarinine C (FsC) and FC is catalyzed by two different nonribosomal peptide synthetases (NRPS), sidD and sidC respectively. Subsequently, sidG catalyzes N2-acetylation of FsC for forming TAFC. Both extra- and intracellular siderophores are crucial for growth during iron limitation and virulence. The sequence is that of FsC-acetyl coenzyme A-N(2)-transacetylase from Aspergillus fumigatus (strain ATCC MYA-4609 / CBS 101355 / FGSC A1100 / Af293) (Neosartorya fumigata).